We begin with the raw amino-acid sequence, 696 residues long: Elongation factor G (696 aa).

The region spanning 8-290 (ERYRNIGISA…KVIELMPAPT (283 aa)) is the tr-type G domain. Residues 17–24 (AHIDAGKT), 88–92 (DTPGH), and 142–145 (NKMD) contribute to the GTP site.

It belongs to the TRAFAC class translation factor GTPase superfamily. Classic translation factor GTPase family. EF-G/EF-2 subfamily.

It localises to the cytoplasm. Catalyzes the GTP-dependent ribosomal translocation step during translation elongation. During this step, the ribosome changes from the pre-translocational (PRE) to the post-translocational (POST) state as the newly formed A-site-bound peptidyl-tRNA and P-site-bound deacylated tRNA move to the P and E sites, respectively. Catalyzes the coordinated movement of the two tRNA molecules, the mRNA and conformational changes in the ribosome. The chain is Elongation factor G from Thiobacillus denitrificans (strain ATCC 25259 / T1).